We begin with the raw amino-acid sequence, 2376 residues long: Cell morphogenesis protein PAG1 (2376 aa).

Residues 1–30 (MASRFTFPPQRDQGIGFTFPPTNKAEGSSN) are disordered. At Ser-141 the chain carries Phosphoserine. The tract at residues 275 to 294 (SSSNTTSKYKHNNNTNNLPG) is disordered. A Phosphoserine modification is found at Ser-1144. Thr-2264 carries the post-translational modification Phosphothreonine. Ser-2267 and Ser-2355 each carry phosphoserine.

It to S.pombe mor2. In terms of assembly, associates with CBK1.

Seems to play a role in cell morphogenesis. This Saccharomyces cerevisiae (strain ATCC 204508 / S288c) (Baker's yeast) protein is Cell morphogenesis protein PAG1 (TAO3).